A 132-amino-acid chain; its full sequence is Large ribosomal subunit protein bL12 (132 aa).

Belongs to the bacterial ribosomal protein bL12 family. In terms of assembly, homodimer. Part of the ribosomal stalk of the 50S ribosomal subunit. Forms a multimeric L10(L12)X complex, where L10 forms an elongated spine to which 2 to 4 L12 dimers bind in a sequential fashion. Binds GTP-bound translation factors.

Forms part of the ribosomal stalk which helps the ribosome interact with GTP-bound translation factors. Is thus essential for accurate translation. The protein is Large ribosomal subunit protein bL12 of Chloroflexus aurantiacus (strain ATCC 29366 / DSM 635 / J-10-fl).